Here is a 109-residue protein sequence, read N- to C-terminus: Probable cytochrome b-c1 complex subunit 7 (109 aa).

This sequence belongs to the UQCRB/QCR7 family. Component of the ubiquinol-cytochrome c oxidoreductase (cytochrome b-c1 complex, complex III, CIII), a multisubunit enzyme composed of 3 respiratory subunits cytochrome b, cytochrome c1 and Rieske protein, 2 core protein subunits, and additional low-molecular weight protein subunits. The complex exists as an obligatory dimer and forms supercomplexes (SCs) in the inner mitochondrial membrane with cytochrome c oxidase (complex IV, CIV).

The protein resides in the mitochondrion inner membrane. Component of the ubiquinol-cytochrome c oxidoreductase, a multisubunit transmembrane complex that is part of the mitochondrial electron transport chain which drives oxidative phosphorylation. The respiratory chain contains 3 multisubunit complexes succinate dehydrogenase (complex II, CII), ubiquinol-cytochrome c oxidoreductase (cytochrome b-c1 complex, complex III, CIII) and cytochrome c oxidase (complex IV, CIV), that cooperate to transfer electrons derived from NADH and succinate to molecular oxygen, creating an electrochemical gradient over the inner membrane that drives transmembrane transport and the ATP synthase. The cytochrome b-c1 complex catalyzes electron transfer from ubiquinol to cytochrome c, linking this redox reaction to translocation of protons across the mitochondrial inner membrane, with protons being carried across the membrane as hydrogens on the quinol. In the process called Q cycle, 2 protons are consumed from the matrix, 4 protons are released into the intermembrane space and 2 electrons are passed to cytochrome c. This is Probable cytochrome b-c1 complex subunit 7 from Dictyostelium discoideum (Social amoeba).